The following is a 398-amino-acid chain: Steroid C26-monooxygenase (398 aa).

Heme is bound at residue Cys340.

The protein belongs to the cytochrome P450 family. It depends on heme as a cofactor.

It catalyses the reaction cholest-4-en-3-one + 6 reduced [2Fe-2S]-[ferredoxin] + 3 O2 + 5 H(+) = (25R)-3-oxocholest-4-en-26-oate + 6 oxidized [2Fe-2S]-[ferredoxin] + 4 H2O. The enzyme catalyses cholest-4-en-3-one + 2 reduced [2Fe-2S]-[ferredoxin] + O2 + 2 H(+) = (25R)-3-oxocholest-4-en-26-ol + 2 oxidized [2Fe-2S]-[ferredoxin] + H2O. The catalysed reaction is (25R)-3-oxocholest-4-en-26-ol + 2 reduced [2Fe-2S]-[ferredoxin] + O2 + 2 H(+) = (25R)-3-oxocholest-4-en-26-al + 2 oxidized [2Fe-2S]-[ferredoxin] + 2 H2O. It carries out the reaction (25R)-3-oxocholest-4-en-26-al + 2 reduced [2Fe-2S]-[ferredoxin] + O2 + H(+) = (25R)-3-oxocholest-4-en-26-oate + 2 oxidized [2Fe-2S]-[ferredoxin] + H2O. It catalyses the reaction cholesterol + NADPH + O2 + H(+) = 26-hydroxycholesterol + NADP(+) + H2O. The enzyme catalyses 26-hydroxycholesterol + 2 reduced [2Fe-2S]-[ferredoxin] + O2 + 2 H(+) = (3beta)-hydroxy-cholest-5-en-26-al + 2 oxidized [2Fe-2S]-[ferredoxin] + 2 H2O. The catalysed reaction is (3beta)-hydroxy-cholest-5-en-26-al + NADPH + O2 = (3beta)-hydroxy-cholest-5-en-26-oate + NADP(+) + H2O. It carries out the reaction (25S)-3-oxocholest-4-en-26-ol + 2 reduced [2Fe-2S]-[ferredoxin] + O2 + 2 H(+) = (25S)-3-oxocholest-4-en-26-al + 2 oxidized [2Fe-2S]-[ferredoxin] + 2 H2O. It catalyses the reaction (25S)-3-oxocholest-4-en-26-al + 2 reduced [2Fe-2S]-[ferredoxin] + O2 + H(+) = (25S)-3-oxocholest-4-en-26-oate + 2 oxidized [2Fe-2S]-[ferredoxin] + H2O. It participates in steroid metabolism; cholesterol degradation. Its activity is regulated as follows. Inhibited by econazole, clotrimazole and miconazole. Its function is as follows. Involved in the utilization of cholesterol as the sole carbon and energy source by degrading the side chain during infection. Primarily catalyzes the sequential oxidation of the terminal methyl of cholest-4-en-3-one into (25R)-26-hydroxycholest-4-en-3-one (alcohol), (25R)-26-oxocholest-4-en-3-one (aldehyde), to finally yield the carboxylic acid (25R)-3-oxocholest-4-en-26-oate. In vitro, Cyp142 catalyzes with equal preference the oxidation of both (25R)- and (25S)-26-hydroxycholest-4-en-3-one diastereomers to the corresponding carboxylic acid which is a prerequisite for entry into the beta-oxidation pathway. Also able to sequentially oxidize cholesterol itself, not only cholest-4-en-3-one. The protein is Steroid C26-monooxygenase (cyp142) of Mycobacterium tuberculosis (strain ATCC 25618 / H37Rv).